The following is an 843-amino-acid chain: DNA-directed RNA polymerase subunit beta' (843 aa).

Zn(2+) contacts are provided by Cys70, Cys72, Cys85, and Cys88. Mg(2+) contacts are provided by Asp686, Asp688, and Asp690.

It belongs to the RNA polymerase beta' chain family. RpoC1 subfamily. In plastids the minimal PEP RNA polymerase catalytic core is composed of four subunits: alpha, beta, beta', and beta''. When a (nuclear-encoded) sigma factor is associated with the core the holoenzyme is formed, which can initiate transcription. Mg(2+) serves as cofactor. The cofactor is Zn(2+).

It is found in the plastid. The protein localises to the chloroplast. It carries out the reaction RNA(n) + a ribonucleoside 5'-triphosphate = RNA(n+1) + diphosphate. In terms of biological role, DNA-dependent RNA polymerase catalyzes the transcription of DNA into RNA using the four ribonucleoside triphosphates as substrates. The protein is DNA-directed RNA polymerase subunit beta' of Trieres chinensis (Marine centric diatom).